Consider the following 134-residue polypeptide: Phosphoribosyl-AMP cyclohydrolase (134 aa).

A Mg(2+)-binding site is contributed by D80. C81 is a binding site for Zn(2+). Residues D82 and D84 each contribute to the Mg(2+) site. Residues C98 and C105 each contribute to the Zn(2+) site.

The protein belongs to the PRA-CH family. Homodimer. Requires Mg(2+) as cofactor. The cofactor is Zn(2+).

The protein localises to the cytoplasm. It catalyses the reaction 1-(5-phospho-beta-D-ribosyl)-5'-AMP + H2O = 1-(5-phospho-beta-D-ribosyl)-5-[(5-phospho-beta-D-ribosylamino)methylideneamino]imidazole-4-carboxamide. The protein operates within amino-acid biosynthesis; L-histidine biosynthesis; L-histidine from 5-phospho-alpha-D-ribose 1-diphosphate: step 3/9. Its function is as follows. Catalyzes the hydrolysis of the adenine ring of phosphoribosyl-AMP. This chain is Phosphoribosyl-AMP cyclohydrolase, found in Bordetella pertussis (strain Tohama I / ATCC BAA-589 / NCTC 13251).